A 284-amino-acid chain; its full sequence is Homeobox protein Hox-D13 (284 aa).

Residues 217–276 (GRKKRVPYTKTQLKELEREYATNKFITKEKRRRISTATNLTERQVTIWFQNRRVKEKKVV) constitute a DNA-binding region (homeobox).

It belongs to the Abd-B homeobox family.

The protein localises to the nucleus. In terms of biological role, sequence-specific transcription factor that binds gene promoters and activates their transcription. Part of a developmental regulatory system that provides cells with specific positional identities on the anterior-posterior axis. This Heterodontus francisci (Horn shark) protein is Homeobox protein Hox-D13 (HOXD13).